Here is a 694-residue protein sequence, read N- to C-terminus: Polyribonucleotide nucleotidyltransferase (694 aa).

Aspartate 486 and aspartate 492 together coordinate Mg(2+). The region spanning 553-612 is the KH domain; that stretch reads PRIETMQIKPTKIASVIGPGGKQIRQIIEETGVQIDVNDLGVVSISASSASAINKAKEII. The region spanning 622–690 is the S1 motif domain; the sequence is GKTYRGRVTS…EKGQLKLSHK (69 aa).

The protein belongs to the polyribonucleotide nucleotidyltransferase family. Requires Mg(2+) as cofactor.

It localises to the cytoplasm. The enzyme catalyses RNA(n+1) + phosphate = RNA(n) + a ribonucleoside 5'-diphosphate. In terms of biological role, involved in mRNA degradation. Catalyzes the phosphorolysis of single-stranded polyribonucleotides processively in the 3'- to 5'-direction. This Chlamydia pneumoniae (Chlamydophila pneumoniae) protein is Polyribonucleotide nucleotidyltransferase.